We begin with the raw amino-acid sequence, 103 residues long: Large ribosomal subunit protein bL21 (103 aa).

Belongs to the bacterial ribosomal protein bL21 family. Part of the 50S ribosomal subunit. Contacts protein L20.

In terms of biological role, this protein binds to 23S rRNA in the presence of protein L20. In Alteromonas mediterranea (strain DSM 17117 / CIP 110805 / LMG 28347 / Deep ecotype), this protein is Large ribosomal subunit protein bL21.